The sequence spans 474 residues: Vitamin D-binding protein (474 aa).

The first 16 residues, 1 to 16 (MKRILVFLLAVAFVHA), serve as a signal peptide directing secretion. 3 Albumin domains span residues 17–208 (LERG…QLKH), 209–393 (FSLL…QLTR), and 394–474 (ELSS…TLQS). Intrachain disulfides connect cysteine 29–cysteine 75 and cysteine 74–cysteine 83. Residue asparagine 86 is glycosylated (N-linked (GlcNAc...) asparagine). 12 disulfide bridges follow: cysteine 96-cysteine 112, cysteine 111-cysteine 122, cysteine 145-cysteine 190, cysteine 189-cysteine 198, cysteine 220-cysteine 266, cysteine 265-cysteine 273, cysteine 285-cysteine 299, cysteine 298-cysteine 310, cysteine 334-cysteine 375, cysteine 374-cysteine 383, cysteine 406-cysteine 452, and cysteine 451-cysteine 461. Asparagine 287 carries N-linked (GlcNAc...) asparagine glycosylation.

It belongs to the ALB/AFP/VDB family. Associates with membrane-bound immunoglobulin on the surface of B-lymphocytes and with IgG Fc receptor on the membranes of T-lymphocytes. Interacts with LRP2; the interaction is required for renal uptake of GC in complex with 25-hydroxyvitamin D3.

Its subcellular location is the secreted. In terms of biological role, involved in vitamin D transport and storage, scavenging of extracellular G-actin, enhancement of the chemotactic activity of C5 alpha for neutrophils in inflammation and macrophage activation. This chain is Vitamin D-binding protein (GC), found in Bos taurus (Bovine).